Reading from the N-terminus, the 187-residue chain is Putative gamma-glutamylcyclotransferase At3g02910 (187 aa).

17-20 (YGTL) serves as a coordination point for substrate. E92 serves as the catalytic Proton acceptor.

Belongs to the gamma-glutamylcyclotransferase family.

Putative gamma-glutamylcyclotransferase. This is Putative gamma-glutamylcyclotransferase At3g02910 from Arabidopsis thaliana (Mouse-ear cress).